The primary structure comprises 337 residues: Beta-ketoacyl-[acyl-carrier-protein] synthase III (337 aa).

Residues Cys-119 and His-260 contribute to the active site. Residues Gln-261–Arg-265 form an ACP-binding region. Residue Asn-290 is part of the active site.

It belongs to the thiolase-like superfamily. FabH family. As to quaternary structure, homodimer.

The protein resides in the cytoplasm. The enzyme catalyses malonyl-[ACP] + acetyl-CoA + H(+) = 3-oxobutanoyl-[ACP] + CO2 + CoA. Its pathway is lipid metabolism; fatty acid biosynthesis. Its function is as follows. Catalyzes the condensation reaction of fatty acid synthesis by the addition to an acyl acceptor of two carbons from malonyl-ACP. Catalyzes the first condensation reaction which initiates fatty acid synthesis and may therefore play a role in governing the total rate of fatty acid production. Possesses both acetoacetyl-ACP synthase and acetyl transacylase activities. Its substrate specificity determines the biosynthesis of branched-chain and/or straight-chain of fatty acids. This chain is Beta-ketoacyl-[acyl-carrier-protein] synthase III, found in Synechococcus sp. (strain WH7803).